The chain runs to 179 residues: Ubiquinol-cytochrome c reductase iron-sulfur subunit (179 aa).

Residues 14-35 form a helical membrane-spanning segment; it reads FLYVATAAVGAAGVAAVAWPFI. In terms of domain architecture, Rieske spans 80-173; the sequence is AKEIQSEEAA…YEFVDNTKIR (94 aa). Cys118, His120, Cys137, and His140 together coordinate [2Fe-2S] cluster. Residues Cys123 and Cys139 are joined by a disulfide bond.

Belongs to the Rieske iron-sulfur protein family. In terms of assembly, the main subunits of complex b-c1 are: cytochrome b, cytochrome c1 and the Rieske protein. [2Fe-2S] cluster serves as cofactor.

The protein resides in the cell membrane. The catalysed reaction is a quinol + 2 Fe(III)-[cytochrome c](out) = a quinone + 2 Fe(II)-[cytochrome c](out) + 2 H(+)(out). Component of the ubiquinol-cytochrome c reductase complex (complex III or cytochrome b-c1 complex), which is a respiratory chain that generates an electrochemical potential coupled to ATP synthesis. The polypeptide is Ubiquinol-cytochrome c reductase iron-sulfur subunit (petA) (Blastochloris viridis (Rhodopseudomonas viridis)).